The primary structure comprises 202 residues: dTTP/UTP pyrophosphatase (202 aa).

Residue Asp83 is the Proton acceptor of the active site.

It belongs to the Maf family. YhdE subfamily. It depends on a divalent metal cation as a cofactor.

Its subcellular location is the cytoplasm. The enzyme catalyses dTTP + H2O = dTMP + diphosphate + H(+). It catalyses the reaction UTP + H2O = UMP + diphosphate + H(+). Functionally, nucleoside triphosphate pyrophosphatase that hydrolyzes dTTP and UTP. May have a dual role in cell division arrest and in preventing the incorporation of modified nucleotides into cellular nucleic acids. The sequence is that of dTTP/UTP pyrophosphatase from Polaromonas sp. (strain JS666 / ATCC BAA-500).